The following is a 377-amino-acid chain: Glutamate 5-kinase (377 aa).

Lysine 18 lines the ATP pocket. Substrate contacts are provided by serine 55, aspartate 142, and asparagine 154. Residues 174-175 and 216-222 each bind ATP; these read SD and TGGMKSK. A PUA domain is found at 281–359; the sequence is QGEVVVDAGA…REIEALLGYK (79 aa).

It belongs to the glutamate 5-kinase family.

It localises to the cytoplasm. It carries out the reaction L-glutamate + ATP = L-glutamyl 5-phosphate + ADP. It functions in the pathway amino-acid biosynthesis; L-proline biosynthesis; L-glutamate 5-semialdehyde from L-glutamate: step 1/2. In terms of biological role, catalyzes the transfer of a phosphate group to glutamate to form L-glutamate 5-phosphate. This is Glutamate 5-kinase from Meiothermus ruber.